An 81-amino-acid chain; its full sequence is Sulfur carrier protein TusA (81 aa).

The Cysteine persulfide intermediate role is filled by C19.

This sequence belongs to the sulfur carrier protein TusA family. Interacts with IscS.

The protein resides in the cytoplasm. It participates in tRNA modification. Functionally, sulfur carrier protein involved in sulfur trafficking in the cell. Part of a sulfur-relay system required for 2-thiolation during synthesis of 2-thiouridine of the modified wobble base 5-methylaminomethyl-2-thiouridine (mnm(5)s(2)U) in tRNA. Interacts with IscS and stimulates its cysteine desulfurase activity. Accepts an activated sulfur from IscS, which is then transferred to TusD, and thus determines the direction of sulfur flow from IscS to 2-thiouridine formation. Also appears to be involved in sulfur transfer for the biosynthesis of molybdopterin. The protein is Sulfur carrier protein TusA of Enterobacter sp. (strain 638).